Here is a 517-residue protein sequence, read N- to C-terminus: Probable mannosyltransferase KTR7 (517 aa).

Residues 1–23 are Cytoplasmic-facing; it reads MAIRLNPKVRRFLLDKCRQKRYG. Residues 24-44 form a helical; Signal-anchor for type II membrane protein membrane-spanning segment; it reads FLFLGCIFAILYCMGTWPFFA. The stem region stretch occupies residues 45 to 85; it reads KDIVHDPNNLPYSLQDYSTDKDEPFFRGCTDTKLYLQNPAY. Over 45–517 the chain is Lumenal; the sequence is KDIVHDPNNL…IRRENFRVIE (473 aa). The catalytic stretch occupies residues 86-517; it reads SKMNASFVML…IRRENFRVIE (432 aa). N-linked (GlcNAc...) asparagine glycosylation is found at Asn-89 and Asn-144. Catalysis depends on Glu-367, which acts as the Nucleophile.

It belongs to the glycosyltransferase 15 family.

The protein localises to the membrane. In terms of biological role, possible glycosyltransferase that transfers an alpha-D-mannosyl residue from GDP-mannose into lipid-linked oligosaccharide, forming an alpha-(1-&gt;2)-D-mannosyl-D-mannose linkage. The chain is Probable mannosyltransferase KTR7 (KTR7) from Saccharomyces cerevisiae (strain ATCC 204508 / S288c) (Baker's yeast).